Reading from the N-terminus, the 87-residue chain is Potassium channel toxin TsTXK-beta/Cryptide TyPep-16 (87 aa).

The first 19 residues, 1–19, serve as a signal peptide directing secretion; it reads MERKLALLLILGMVTLASC. Positions 53 to 87 constitute a BetaSPN-type CS-alpha/beta domain; it reads QFGCPAYEGYCNDHCNDIERKDGECHGFKCKCAKD. 3 disulfides stabilise this stretch: Cys56–Cys77, Cys63–Cys82, and Cys67–Cys84.

The protein belongs to the long chain scorpion toxin family. Class 1 subfamily. As to expression, expressed by the venom gland.

Its subcellular location is the secreted. Specifically blocks voltage-gated potassium channels Kv4.2/KCND2. When measured at the peak current, the blocking effect of this toxin is about 65% and shows an IC(50)=652 nM. However, when measured at a later moment of the depolarising test pulse (500 ms), a 100% block of the current is observed with an IC(50)=313 nM. This may indicate a preference of the toxin for binding the inactivated state of the channel. The inhibition is completely reversible. In vivo, intraplantar injection into rat paw induces overt nociception (licking and lifting behaviors) and decreases the mechanical nociceptive threshold (hyperalgesia). Furthermore, the hyperalgesia is prolonged when intrathecal injections are performed. In terms of biological role, induces discomfort and anxiety in mice, as it moderately diminishes locomotion (but has no effect on rearing behavior). Does not cause hemolysis, mast cell degranulation, LDH release, and does not have antimicrobial activity. Does not cause edema and pain. Functionally, does not induce hemolytic activity, lactate dehydrogenase (LDH) release from mast cells, mast cell degranulation, and antimicrobial effects. In vivo, injection into mice causes moderate edema formation, but induces very weak or no change in nociceptive sensibility. It also reduces mice locomotion, suggesting an increase in anxiety, but causes no alteration in rearing (standing on hind limbs). This Tityus serrulatus (Brazilian scorpion) protein is Potassium channel toxin TsTXK-beta/Cryptide TyPep-16.